A 200-amino-acid chain; its full sequence is Charged multivesicular body protein 6 (200 aa).

The N-myristoyl glycine moiety is linked to residue G2. Positions 10-94 (RSRVTEQDKA…ERMVQDIEFT (85 aa)) form a coiled coil. The short motif at 168–179 (LELPDVPSEPLP) is the Type-2 MIT-interacting motif element. The disordered stretch occupies residues 169–200 (ELPDVPSEPLPEEPPEATPVKNRPKPELVAAS).

Belongs to the SNF7 family. In terms of assembly, probable core component of the endosomal sorting required for transport complex III (ESCRT-III). ESCRT-III components are thought to multimerize to form a flat lattice on the perimeter membrane of the endosome.

It is found in the endomembrane system. The protein localises to the late endosome membrane. Functionally, probable core component of the endosomal sorting required for transport complex III (ESCRT-III) which is involved in multivesicular bodies (MVBs) formation and sorting of endosomal cargo proteins into MVBs. MVBs contain intraluminal vesicles (ILVs) that are generated by invagination and scission from the limiting membrane of the endosome and mostly are delivered to lysosomes enabling degradation of membrane proteins, such as stimulated growth factor receptors, lysosomal enzymes and lipids. In the ESCRT-III complex, it probably serves as an acceptor for the ESCRT-II complex on endosomal membranes. The polypeptide is Charged multivesicular body protein 6 (CHMP6) (Gallus gallus (Chicken)).